Here is an 85-residue protein sequence, read N- to C-terminus: Phosphocarrier protein HPr (85 aa).

An HPr domain is found at 1–85 (MFQQEVTITA…HLVKLMAELE (85 aa)). His15 acts as the Pros-phosphohistidine intermediate in catalysis.

It localises to the cytoplasm. Functionally, general (non sugar-specific) component of the phosphoenolpyruvate-dependent sugar phosphotransferase system (sugar PTS). This major carbohydrate active-transport system catalyzes the phosphorylation of incoming sugar substrates concomitantly with their translocation across the cell membrane. The phosphoryl group from phosphoenolpyruvate (PEP) is transferred to the phosphoryl carrier protein HPr by enzyme I. Phospho-HPr then transfers it to the PTS EIIA domain. In Klebsiella pneumoniae, this protein is Phosphocarrier protein HPr (ptsH).